The following is a 70-amino-acid chain: Probable protein transport protein Sec61 subunit gamma (70 aa).

Residues 1 to 39 (MADQIQEILDVPREFLKDGIQFIKKCQKPDRREFIKISQ) lie on the Cytoplasmic side of the membrane. A helical transmembrane segment spans residues 40–58 (AVGTGFLIMGAVGYLVKLI). Over 59 to 70 (HIPLNQVLVGGA) the chain is Extracellular.

This sequence belongs to the SecE/SEC61-gamma family. As to quaternary structure, heterotrimeric complex composed of SEC61-alpha, SEC61-beta and SEC61-gamma.

The protein resides in the endoplasmic reticulum membrane. Functionally, necessary for protein translocation in the endoplasmic reticulum. This Neurospora crassa (strain ATCC 24698 / 74-OR23-1A / CBS 708.71 / DSM 1257 / FGSC 987) protein is Probable protein transport protein Sec61 subunit gamma.